Reading from the N-terminus, the 501-residue chain is MSTANKKPTESVSLNAFKQPKAFYLIFSIELWERFGYYGLQGIMAVYLVKQLGMSEADSITLFSSFSALVYGLVAIGGWLGDKILGTKRVIMLGAVVLAIGYALVAWSGHDAGIVYMGMAAIAVGNGLFKANPSSLLSTCYAKDDPRLDGAFTMYYMSVNIGSFFSMLATPWLAARYGWSTAFALSVVGMLITVVNFAFCQRWVKSYGSKPDFEPINFRNLLLTIVGIVVLIAVATWLLHNQDIARMVLGVIALGIVIIFGKEAFSMHGAARRKMIVAFILMLQAIIFFVLYSQMPTSLNFFAIRNVEHSILGIAFEPEQYQALNPFWIITGSPILAAIYNRMGDTLPMPMKFAIGMVLCSGAFLILPLGAKFANDAGIVSVNWLIASYGLQSIGELMISGLGLAMVAQLVPQRLMGFIMGSWFLTTAGANIIGGYVANLMAVPSDVTDPLMSLEVYGRVFMQIGIATAVIAVLMLLTAPKLNRMTQDDDTAEKGSKAATV.

Residues 1 to 21 (MSTANKKPTESVSLNAFKQPK) lie on the Cytoplasmic side of the membrane. The helical transmembrane segment at 22–44 (AFYLIFSIELWERFGYYGLQGIM) threads the bilayer. Residues 45–59 (AVYLVKQLGMSEADS) are Periplasmic-facing. The helical transmembrane segment at 60–80 (ITLFSSFSALVYGLVAIGGWL) threads the bilayer. Residues 81–89 (GDKILGTKR) are Cytoplasmic-facing. The helical transmembrane segment at 90–110 (VIMLGAVVLAIGYALVAWSGH) threads the bilayer. A topological domain (periplasmic) is located at residue D111. The helical transmembrane segment at 112 to 132 (AGIVYMGMAAIAVGNGLFKAN) threads the bilayer. The Cytoplasmic segment spans residues 133–153 (PSSLLSTCYAKDDPRLDGAFT). The helical transmembrane segment at 154-174 (MYYMSVNIGSFFSMLATPWLA) threads the bilayer. Residues 175 to 178 (ARYG) are Periplasmic-facing. The chain crosses the membrane as a helical span at residues 179 to 199 (WSTAFALSVVGMLITVVNFAF). At 200-219 (CQRWVKSYGSKPDFEPINFR) the chain is on the cytoplasmic side. A helical membrane pass occupies residues 220–240 (NLLLTIVGIVVLIAVATWLLH). Topologically, residues 241 to 246 (NQDIAR) are periplasmic. Residues 247-267 (MVLGVIALGIVIIFGKEAFSM) traverse the membrane as a helical segment. At 268–274 (HGAARRK) the chain is on the cytoplasmic side. The chain crosses the membrane as a helical span at residues 275–295 (MIVAFILMLQAIIFFVLYSQM). The Periplasmic portion of the chain corresponds to 296–320 (PTSLNFFAIRNVEHSILGIAFEPEQ). Residues 321–341 (YQALNPFWIITGSPILAAIYN) traverse the membrane as a helical segment. The Cytoplasmic portion of the chain corresponds to 342-352 (RMGDTLPMPMK). A helical transmembrane segment spans residues 353–373 (FAIGMVLCSGAFLILPLGAKF). Residues 374–383 (ANDAGIVSVN) are Periplasmic-facing. A helical transmembrane segment spans residues 384-404 (WLIASYGLQSIGELMISGLGL). The Cytoplasmic segment spans residues 405 to 414 (AMVAQLVPQR). A helical membrane pass occupies residues 415–435 (LMGFIMGSWFLTTAGANIIGG). The Periplasmic portion of the chain corresponds to 436 to 459 (YVANLMAVPSDVTDPLMSLEVYGR). A helical membrane pass occupies residues 460 to 480 (VFMQIGIATAVIAVLMLLTAP). Residues 481–501 (KLNRMTQDDDTAEKGSKAATV) lie on the Cytoplasmic side of the membrane.

The protein belongs to the major facilitator superfamily. Proton-dependent oligopeptide transporter (POT/PTR) (TC 2.A.17) family. DtpA subfamily.

It localises to the cell inner membrane. Functionally, proton-dependent permease that transports di- and tripeptides. The protein is Dipeptide and tripeptide permease A of Salmonella typhi.